The primary structure comprises 227 residues: (S)-2-haloacid dehalogenase 1 (227 aa).

Asp10 (nucleophile) is an active-site residue. An (S)-2-haloacid-binding positions include 11-12 (AY), Arg41, and 118-119 (SN). The segment at 175–180 (SSNAWD) is important for catalytic activity.

The protein belongs to the HAD-like hydrolase superfamily. S-2-haloalkanoic acid dehalogenase family.

It catalyses the reaction an (S)-2-haloacid + H2O = a (2R)-2-hydroxycarboxylate + a halide anion + H(+). The catalysed reaction is (S)-2-chloropropanoate + H2O = (R)-lactate + chloride + H(+). In terms of biological role, catalyzes the hydrolytic dehalogenation of small (S)-2-haloalkanoic acids to yield the corresponding (R)-2-hydroxyalkanoic acids. Acts on acids of short chain lengths, C(2) to C(4), with inversion of configuration at C-2. Active with 2-halogenated carboxylic acids and converts only the S-isomer (or L-isomer) of 2-chloropropionic acid with inversion of configuration to produce R-lactate (or D-isomer). This Pseudomonas sp. (strain CBS-3) protein is (S)-2-haloacid dehalogenase 1.